A 61-amino-acid polypeptide reads, in one-letter code: Potassium channel toxin alpha-KTx 6.8 (61 aa).

The first 23 residues, 1–23, serve as a signal peptide directing secretion; that stretch reads MNAKFILLLLVVTTTILLPDTQG. 4 disulfide bridges follow: cysteine 29–cysteine 50, cysteine 35–cysteine 55, cysteine 39–cysteine 57, and cysteine 45–cysteine 60. A Cysteine amide modification is found at cysteine 60.

The protein belongs to the short scorpion toxin superfamily. Potassium channel inhibitor family. Alpha-KTx 06 subfamily. As to expression, expressed by the venom gland.

The protein localises to the secreted. Functionally, blocker of voltage-gated potassium channels. The polypeptide is Potassium channel toxin alpha-KTx 6.8 (Opistophthalmus carinatus (African yellow leg scorpion)).